Here is a 271-residue protein sequence, read N- to C-terminus: Neurexophilin-1 (271 aa).

Residues 1-21 form the signal peptide; it reads MQAACWYVLFLLQPTVYLVTC. The interval 22-97 is II; that stretch reads ANLTNGGKSE…WDWLRNSTDL (76 aa). N23, N68, N93, N146, N156, and N162 each carry an N-linked (GlcNAc...) asparagine glycan. Residues 98–176 are III; the sequence is QEPRPRAKRR…LVPPTKIVEF (79 aa). The interval 177–185 is IV (linker domain); that stretch reads DLAQQTVID. The segment at 186 to 271 is v (Cys-rich); that stretch reads AKDSKSFNCR…HSDTPYFPSG (86 aa).

It belongs to the neurexophilin family.

The protein resides in the secreted. May be signaling molecules that resemble neuropeptides and that act by binding to alpha-neurexins and possibly other receptors. In Homo sapiens (Human), this protein is Neurexophilin-1 (NXPH1).